The sequence spans 136 residues: Class I hydrophobin 16 (136 aa).

Positions 1-19 (MKFTSVIALVATAATLVGA) are cleaved as a signal peptide. Disulfide bonds link cysteine 58–cysteine 115, cysteine 65–cysteine 109, cysteine 66–cysteine 99, and cysteine 116–cysteine 129. Asparagine 74 carries N-linked (GlcNAc...) asparagine glycosylation.

Belongs to the fungal hydrophobin family. In terms of assembly, self-assembles to form functional amyloid fibrils called rodlets. Self-assembly into fibrillar rodlets occurs spontaneously at hydrophobic:hydrophilic interfaces and the rodlets further associate laterally to form amphipathic monolayers.

It localises to the secreted. The protein localises to the cell wall. In terms of biological role, aerial growth, conidiation, and dispersal of filamentous fungi in the environment rely upon a capability of their secreting small amphipathic proteins called hydrophobins (HPBs) with low sequence identity. Class I can self-assemble into an outermost layer of rodlet bundles on aerial cell surfaces, conferring cellular hydrophobicity that supports fungal growth, development and dispersal; whereas Class II form highly ordered films at water-air interfaces through intermolecular interactions but contribute nothing to the rodlet structure. Hydph16 is a class I hydrophobin that has specific functions in aerial mycelium formation, cell wall stress protection, and cell wall structure formation, but does not seem to be involved in mycelial hydrophobicity. Specifically functions in resisting cell wall synthesis inhibitors. The polypeptide is Class I hydrophobin 16 (Pleurotus ostreatus (strain PC15) (Oyster mushroom)).